A 231-amino-acid chain; its full sequence is Phosphoribosylformylglycinamidine synthase subunit PurQ (231 aa).

The 225-residue stretch at 7–231 (GVVVFPGSNC…RLFASLFRQL (225 aa)) folds into the Glutamine amidotransferase type-1 domain. The active-site Nucleophile is Cys-89. Residues His-206 and Glu-208 contribute to the active site.

In terms of assembly, part of the FGAM synthase complex composed of 1 PurL, 1 PurQ and 2 PurS subunits.

It localises to the cytoplasm. The catalysed reaction is N(2)-formyl-N(1)-(5-phospho-beta-D-ribosyl)glycinamide + L-glutamine + ATP + H2O = 2-formamido-N(1)-(5-O-phospho-beta-D-ribosyl)acetamidine + L-glutamate + ADP + phosphate + H(+). It catalyses the reaction L-glutamine + H2O = L-glutamate + NH4(+). Its pathway is purine metabolism; IMP biosynthesis via de novo pathway; 5-amino-1-(5-phospho-D-ribosyl)imidazole from N(2)-formyl-N(1)-(5-phospho-D-ribosyl)glycinamide: step 1/2. Functionally, part of the phosphoribosylformylglycinamidine synthase complex involved in the purines biosynthetic pathway. Catalyzes the ATP-dependent conversion of formylglycinamide ribonucleotide (FGAR) and glutamine to yield formylglycinamidine ribonucleotide (FGAM) and glutamate. The FGAM synthase complex is composed of three subunits. PurQ produces an ammonia molecule by converting glutamine to glutamate. PurL transfers the ammonia molecule to FGAR to form FGAM in an ATP-dependent manner. PurS interacts with PurQ and PurL and is thought to assist in the transfer of the ammonia molecule from PurQ to PurL. The chain is Phosphoribosylformylglycinamidine synthase subunit PurQ from Chlorobium luteolum (strain DSM 273 / BCRC 81028 / 2530) (Pelodictyon luteolum).